The primary structure comprises 67 residues: LPS-assembly lipoprotein LptM (67 aa).

The first 19 residues, 1-19 (MKNVFKTLAVLLTLFSLTG), serve as a signal peptide directing secretion. Residue cysteine 20 is the site of N-palmitoyl cysteine attachment. Cysteine 20 carries the S-diacylglycerol cysteine lipid modification. Positions 26–67 (LYFPPADKNAPPPTKKVDSQTQSTMPDKNDRATGDGPSQVNY) are disordered.

This sequence belongs to the LptM family. In terms of assembly, interacts with the outer membrane embedded portion of the LPS translocon formed by LptD and LptE (LptDE).

It localises to the cell outer membrane. In terms of biological role, component of the lipopolysaccharide (LPS) transport (Lpt) pathway that promotes efficient assembly of the outer membrane LPS translocon (LptDE) by the BAM complex. Facilitates oxidative maturation of LptD by stabilizing a conformation of the LPS translocon in which LptD can efficiently acquire native disulfide bonds, thereby activating the LPS translocon. This Salmonella typhi protein is LPS-assembly lipoprotein LptM.